A 344-amino-acid chain; its full sequence is Phenylalanine--tRNA ligase alpha subunit (344 aa).

Glu256 is a binding site for Mg(2+).

It belongs to the class-II aminoacyl-tRNA synthetase family. Phe-tRNA synthetase alpha subunit type 1 subfamily. Tetramer of two alpha and two beta subunits. Mg(2+) is required as a cofactor.

Its subcellular location is the cytoplasm. The enzyme catalyses tRNA(Phe) + L-phenylalanine + ATP = L-phenylalanyl-tRNA(Phe) + AMP + diphosphate + H(+). The protein is Phenylalanine--tRNA ligase alpha subunit of Oceanobacillus iheyensis (strain DSM 14371 / CIP 107618 / JCM 11309 / KCTC 3954 / HTE831).